A 218-amino-acid chain; its full sequence is Glutathione S-transferase Mu 2 (218 aa).

A GST N-terminal domain is found at 2 to 88 (PIILGYWNIR…YIARKHNLCG (87 aa)). 7–8 (YW) serves as a coordination point for glutathione. Serine 27 and serine 44 each carry phosphoserine. Residues 43–46 (RSQW), lysine 50, 59–60 (NL), and 72–73 (QS) contribute to the glutathione site. Residues 90–208 (TEKEKIQEDI…KSSRFLPRPV (119 aa)) form the GST C-terminal domain. Residue tyrosine 116 participates in substrate binding.

It belongs to the GST superfamily. Mu family. As to quaternary structure, homodimer.

The protein resides in the cytoplasm. The catalysed reaction is RX + glutathione = an S-substituted glutathione + a halide anion + H(+). It catalyses the reaction 11(S)-hydroxy-14(S),15(S)-epoxy-(5Z,8Z,12E)-eicosatrienoate + glutathione = (11S,15S)-dihydroxy-14(R)-S-glutathionyl-(5Z,8Z,12E)-eicosatrienoate. Conjugation of reduced glutathione to a wide number of exogenous and endogenous hydrophobic electrophiles. Participates in the formation of novel hepoxilin regioisomers. The chain is Glutathione S-transferase Mu 2 (GSTM2) from Pongo abelii (Sumatran orangutan).